A 432-amino-acid polypeptide reads, in one-letter code: Histidine--tRNA ligase (432 aa).

Residues threonine 412–alanine 432 form a disordered region. The span at glutamate 422–alanine 432 shows a compositional bias: basic and acidic residues.

Belongs to the class-II aminoacyl-tRNA synthetase family.

It localises to the cytoplasm. It catalyses the reaction tRNA(His) + L-histidine + ATP = L-histidyl-tRNA(His) + AMP + diphosphate + H(+). In Natronomonas pharaonis (strain ATCC 35678 / DSM 2160 / CIP 103997 / JCM 8858 / NBRC 14720 / NCIMB 2260 / Gabara) (Halobacterium pharaonis), this protein is Histidine--tRNA ligase.